The primary structure comprises 342 residues: Autoinducer 2 import system permease protein LsrC (342 aa).

Over 1–13 (MLKFIQNNREITA) the chain is Periplasmic. A helical transmembrane segment spans residues 14–34 (LLAVLLLFVLPGFLDRQYLSV). Residues 35–38 (QTLT) are Cytoplasmic-facing. The helical transmembrane segment at 39–59 (MVYSSAQILILLAMGATLVML) threads the bilayer. Residues 60–69 (TRNIDVSVGS) are Periplasmic-facing. A helical membrane pass occupies residues 70–90 (ITGMCAVLLGMLLNAGYSLPV). The Cytoplasmic portion of the chain corresponds to 91–92 (AC). A helical membrane pass occupies residues 93 to 113 (VATLLLGLLAGFFNGVLVAWL). A topological domain (periplasmic) is located at residue lysine 114. The helical transmembrane segment at 115–135 (IPAIVATLGTLGLYRGIMLLW) threads the bilayer. Topologically, residues 136-154 (TGGKWIEGLPAELKQLSAP) are cytoplasmic. Residues 155–175 (LLLGVSAIGWLTIILVAFMAW) form a helical membrane-spanning segment. Over 176–212 (LLAKTAFGRSFYATGDNLQGARQLGVRTEAIRIVAFS) the chain is Periplasmic. Residues 213-233 (LNGCMAALAGIVFASQIGFIP) form a helical membrane-spanning segment. Residues 234 to 251 (NQTGTGLEMKAIAACVLG) lie on the Cytoplasmic side of the membrane. The chain crosses the membrane as a helical span at residues 252 to 272 (GISLLGGSGAIIGAVLGAWFL). The Periplasmic portion of the chain corresponds to 273–283 (TQIDSVLVLLR). Residues 284–304 (IPAWWNDFIAGLVLLAVLVFD) traverse the membrane as a helical segment. At 305-342 (GRLRCALELNLRRQKYARFMTPPPSVKPASSGKKREAA) the chain is on the cytoplasmic side.

It belongs to the binding-protein-dependent transport system permease family. AraH/RbsC subfamily. The complex is composed of two ATP-binding proteins (LsrA), two transmembrane proteins (LsrC and LsrD) and a solute-binding protein (LsrB).

Its subcellular location is the cell inner membrane. Part of the ABC transporter complex LsrABCD involved in autoinducer 2 (AI-2) import. Probably responsible for the translocation of the substrate across the membrane. In Escherichia coli O157:H7, this protein is Autoinducer 2 import system permease protein LsrC (lsrC).